Consider the following 104-residue polypeptide: Thioredoxin (104 aa).

The 103-residue stretch at 2–104 (AIVKVTDADF…NLAEVLDKHL (103 aa)) folds into the Thioredoxin domain. A disulfide bridge connects residues C29 and C32.

This sequence belongs to the thioredoxin family.

In terms of biological role, component of the thioredoxin-thioredoxin reductase system. Participates in various redox reactions through the reversible oxidation of its active center dithiol to a disulfide and catalyzes dithiol-disulfide exchange reactions. The chain is Thioredoxin (trxA) from Staphylococcus aureus (strain N315).